Reading from the N-terminus, the 138-residue chain is Large ribosomal subunit protein uL16 (138 aa).

Residues 1–16 (MLIPKRVKYRRQHRPT) show a composition bias toward basic residues. A disordered region spans residues 1–23 (MLIPKRVKYRRQHRPTRSGISKG).

This sequence belongs to the universal ribosomal protein uL16 family. As to quaternary structure, part of the 50S ribosomal subunit.

Functionally, binds 23S rRNA and is also seen to make contacts with the A and possibly P site tRNAs. In Corynebacterium glutamicum (strain R), this protein is Large ribosomal subunit protein uL16.